A 2242-amino-acid polypeptide reads, in one-letter code: Large tegument protein deneddylase (2242 aa).

The interval 1–238 (MKVTQASCHQ…IDLTGVVRES (238 aa)) is deubiquitination activity. In terms of domain architecture, Peptidase C76 spans 4–226 (TQASCHQGDI…AARLVSTYRD (223 aa)). Active-site residues include C24, D160, and H162. The interval 239 to 318 (ADTAATTTTA…KTLATASSSS (80 aa)) is disordered. A compositionally biased stretch (low complexity) spans 240-250 (DTAATTTTAAP). Pro residues predominate over residues 251 to 268 (SLPPLPDPIVDPGCPPGV). Over residues 304 to 318 (PSTTSKTLATASSSS) the composition is skewed to low complexity. The interval 328–332 (SSAVP) is interaction with inner tegument protein. The segment covering 1173–1190 (SQQKMEGQLQETRQQMTE) has biased composition (polar residues). Positions 1173 to 1229 (SQQKMEGQLQETRQQMTETSERLDRSLRQDPGSSSVTRVPEKPFKGQELAGRITPPP) are disordered. A compositionally biased stretch (basic and acidic residues) spans 1191–1200 (TSERLDRSLR).

Belongs to the herpesviridae large tegument protein family. As to quaternary structure, interacts with host CUL1 and CUL4A; these interactions inhibit the E3 ligase activity of cullins. Interacts with inner tegument protein. Interacts with capsid vertex specific component CVC2. Interacts with the major capsid protein/MCP.

Its subcellular location is the virion tegument. It localises to the host cytoplasm. The protein localises to the host nucleus. The enzyme catalyses Thiol-dependent hydrolysis of ester, thioester, amide, peptide and isopeptide bonds formed by the C-terminal Gly of ubiquitin (a 76-residue protein attached to proteins as an intracellular targeting signal).. Its function is as follows. Large tegument protein that plays multiple roles in the viral cycle. During viral entry, remains associated with the capsid while most of the tegument is detached and participates in the capsid transport toward the host nucleus. Plays a role in the routing of the capsid at the nuclear pore complex and subsequent uncoating. Within the host nucleus, acts as a deneddylase and promotes the degradation of nuclear CRLs (cullin-RING ubiquitin ligases) and thereby stabilizes nuclear CRL substrates, while cytoplasmic CRLs remain unaffected. These modifications prevent host cell cycle S-phase progression and create a favorable environment allowing efficient viral genome replication. Participates later in the secondary envelopment of capsids. Indeed, plays a linker role for the association of the outer viral tegument to the capsids together with the inner tegument protein. In Homo sapiens (Human), this protein is Large tegument protein deneddylase.